The primary structure comprises 426 residues: Enolase (426 aa).

Residue glutamine 163 coordinates (2R)-2-phosphoglycerate. Residue glutamate 205 is the Proton donor of the active site. Mg(2+) contacts are provided by aspartate 242, glutamate 286, and aspartate 313. 4 residues coordinate (2R)-2-phosphoglycerate: lysine 338, arginine 367, serine 368, and lysine 389. Lysine 338 (proton acceptor) is an active-site residue.

Belongs to the enolase family. Mg(2+) serves as cofactor.

Its subcellular location is the cytoplasm. It is found in the secreted. It localises to the cell surface. The catalysed reaction is (2R)-2-phosphoglycerate = phosphoenolpyruvate + H2O. Its pathway is carbohydrate degradation; glycolysis; pyruvate from D-glyceraldehyde 3-phosphate: step 4/5. Catalyzes the reversible conversion of 2-phosphoglycerate (2-PG) into phosphoenolpyruvate (PEP). It is essential for the degradation of carbohydrates via glycolysis. The chain is Enolase from Helicobacter pylori (strain ATCC 700392 / 26695) (Campylobacter pylori).